The sequence spans 393 residues: Probable alpha-1,6-mannosyltransferase MNN10 (393 aa).

Over methionine 1 to lysine 52 the chain is Cytoplasmic. The helical; Signal-anchor for type II membrane protein transmembrane segment at leucine 53 to serine 73 threads the bilayer. The Lumenal segment spans residues arginine 74–proline 393. Positions serine 77–serine 97 are disordered.

This sequence belongs to the glycosyltransferase 34 family. In terms of assembly, component of the M-Pol II complex composed of ANP1, MNN9, MNN10, MNN11 and HOC1.

The protein localises to the endoplasmic reticulum membrane. It localises to the golgi apparatus. The protein resides in the cis-Golgi network membrane. In terms of biological role, required for polarized growth and efficient budding. Its function is as follows. The M-Pol II complex possesses alpha-1,6-mannosyltransferase activity and is probably involved in the elongation of the mannan backbone of N-linked glycans on cell wall and periplasmic proteins. In Saccharomyces cerevisiae (strain ATCC 204508 / S288c) (Baker's yeast), this protein is Probable alpha-1,6-mannosyltransferase MNN10 (MNN10).